We begin with the raw amino-acid sequence, 261 residues long: Polyamine aminopropyltransferase (261 aa).

Residues 1–219 (MHPFRRRVRP…AVMAFRQSPS (219 aa)) form the PABS domain. S-methyl-5'-thioadenosine-binding positions include D96 and 124-125 (DG). D142 acts as the Proton acceptor in catalysis.

It belongs to the spermidine/spermine synthase family. As to quaternary structure, homodimer or homotetramer.

The protein localises to the cytoplasm. It catalyses the reaction S-adenosyl 3-(methylsulfanyl)propylamine + putrescine = S-methyl-5'-thioadenosine + spermidine + H(+). Its pathway is amine and polyamine biosynthesis; spermidine biosynthesis; spermidine from putrescine: step 1/1. Catalyzes the irreversible transfer of a propylamine group from the amino donor S-adenosylmethioninamine (decarboxy-AdoMet) to putrescine (1,4-diaminobutane) to yield spermidine. In Chromobacterium violaceum (strain ATCC 12472 / DSM 30191 / JCM 1249 / CCUG 213 / NBRC 12614 / NCIMB 9131 / NCTC 9757 / MK), this protein is Polyamine aminopropyltransferase.